The chain runs to 1831 residues: Transmembrane protein 131 homolog (1831 aa).

An N-terminal signal peptide occupies residues 1–29; the sequence is MVPSIHKTSNRYRTIYFFLISLLITSTFA. Topologically, residues 30–1169 are lumenal; it reads DQQAWPLPEE…QALPRPPFEN (1140 aa). A papD-L domain region spans residues 118 to 294; it reads EMDPPMMDFG…QSKQIATLVL (177 aa). Residues 1170–1190 traverse the membrane as a helical segment; the sequence is IMYYSCVTALIFCLVCVLACA. At 1191 to 1831 the chain is on the cytoplasmic side; it reads YLEGDRAIAV…TDNENDEKNN (641 aa). Residues 1223–1234 show a composition bias toward low complexity; sequence STTTPVPTVPST. 4 disordered regions span residues 1223-1252, 1325-1516, 1663-1759, and 1800-1831; these read STTTPVPTVPSTAKPESSIKKPTPATRPST, GQQK…PTDD, QMKR…VSNP, and WSSSSLFHPPTQQPSTSQMPQDTDNENDEKNN. The segment covering 1338–1349 has biased composition (acidic residues); that stretch reads PEFDEVEEEELA. Composition is skewed to low complexity over residues 1394 to 1407 and 1435 to 1448; these read PIIVQPVVQSPPVQ and QVPPVTKTPVTPKT. Positions 1455 to 1467 are enriched in basic and acidic residues; the sequence is EPEKPIKPSEQKK. Polar residues predominate over residues 1480–1497; it reads TPSKARTPSKTPSQSNRA. Residues 1500 to 1514 show a composition bias toward low complexity; that stretch reads PASSPAPIAPTSAPT. 3 stretches are compositionally biased toward polar residues: residues 1669–1687, 1702–1733, and 1742–1758; these read SPSQASSTLSRKLENSPQK, NQSSSSALNPNYDFTRTPGNPNRMQMSQNSIQ, and WGDNSNSDPWGTNTVSN. Low complexity predominate over residues 1808–1820; sequence PPTQQPSTSQMPQ. The segment covering 1822 to 1831 has biased composition (acidic residues); the sequence is TDNENDEKNN.

It belongs to the TMEM131 family. In terms of assembly, may interact (via PapD-L domain) with collagen proteins (via C-terminus); the interaction is direct and is involved in assembly and secretion of collagen. As to expression, predominantly expressed in the intestine and hypodermis.

It is found in the membrane. The protein resides in the endoplasmic reticulum membrane. Functionally, collagen binding transmembrane protein involved in collagen secretion, probably by recruiting the ER-to-Golgi transport complex TRAPPIII. Required for normal development. The polypeptide is Transmembrane protein 131 homolog (Caenorhabditis elegans).